Consider the following 173-residue polypeptide: C-phycocyanin-2 beta subunit (173 aa).

The residue at position 73 (asparagine 73) is an N4-methylasparagine. (2R,3E)-phycocyanobilin is bound by residues cysteine 83 and cysteine 154.

The protein belongs to the phycobiliprotein family. In terms of assembly, heterodimer of an alpha and a beta subunit, which further assembles into trimers and the trimers into hexamers. In terms of processing, contains two covalently linked bilin chromophores.

The protein resides in the cellular thylakoid membrane. Its function is as follows. Light-harvesting photosynthetic bile pigment-protein from the phycobiliprotein complex (phycobilisome, PBS). Phycocyanin is the major phycobiliprotein in the PBS rod. This is C-phycocyanin-2 beta subunit (cpcB2) from Synechococcus sp. (strain ATCC 27144 / PCC 6301 / SAUG 1402/1) (Anacystis nidulans).